The chain runs to 516 residues: Arginyl-tRNA--protein transferase 1 (516 aa).

Residues 150–180 (IESEEKEKEKSIKKEGSKEFIHPQSIEEKLG) show a composition bias toward basic and acidic residues. The segment at 150–206 (IESEEKEKEKSIKKEGSKEFIHPQSIEEKLGSGEPSHPIKVHIGPKPGKGADLSKPP) is disordered.

The protein belongs to the R-transferase family. In terms of assembly, monomer. Interacts with LIAT1; LIAT1 is not a substrate of ATE1, the interaction takes place in the cytoplasm and seems to increase ATE1 arginyltransferase activity. As to quaternary structure, interacts with LIAT1; has a higher affinity than the other isoforms. In terms of tissue distribution, widely expressed.

It localises to the nucleus. The protein localises to the cytoplasm. The enzyme catalyses an N-terminal L-alpha-aminoacyl-[protein] + L-arginyl-tRNA(Arg) = an N-terminal L-arginyl-L-aminoacyl-[protein] + tRNA(Arg) + H(+). Its function is as follows. Involved in the post-translational conjugation of arginine to the N-terminal aspartate or glutamate of a protein. This arginylation is required for degradation of the protein via the ubiquitin pathway. Does not arginylate cysteine residues. This chain is Arginyl-tRNA--protein transferase 1, found in Mus musculus (Mouse).